Here is a 434-residue protein sequence, read N- to C-terminus: Glutamyl-tRNA reductase (434 aa).

Residues 49 to 52 (TCNR), Ser109, 114 to 116 (EPQ), and Gln120 contribute to the substrate site. The active-site Nucleophile is Cys50. NADP(+) is bound at residue 189 to 194 (GAGEMA).

It belongs to the glutamyl-tRNA reductase family. In terms of assembly, homodimer.

It catalyses the reaction (S)-4-amino-5-oxopentanoate + tRNA(Glu) + NADP(+) = L-glutamyl-tRNA(Glu) + NADPH + H(+). It participates in porphyrin-containing compound metabolism; protoporphyrin-IX biosynthesis; 5-aminolevulinate from L-glutamyl-tRNA(Glu): step 1/2. Its function is as follows. Catalyzes the NADPH-dependent reduction of glutamyl-tRNA(Glu) to glutamate 1-semialdehyde (GSA). The chain is Glutamyl-tRNA reductase from Desulfatibacillum aliphaticivorans.